The chain runs to 569 residues: Sulfite reductase [NADPH] hemoprotein beta-component (569 aa).

[4Fe-4S] cluster is bound by residues C433, C439, C478, and C482. A siroheme-binding site is contributed by C482.

The protein belongs to the nitrite and sulfite reductase 4Fe-4S domain family. Alpha(8)-beta(8). The alpha component is a flavoprotein, the beta component is a hemoprotein. It depends on siroheme as a cofactor. The cofactor is [4Fe-4S] cluster.

It catalyses the reaction hydrogen sulfide + 3 NADP(+) + 3 H2O = sulfite + 3 NADPH + 4 H(+). It participates in sulfur metabolism; hydrogen sulfide biosynthesis; hydrogen sulfide from sulfite (NADPH route): step 1/1. In terms of biological role, component of the sulfite reductase complex that catalyzes the 6-electron reduction of sulfite to sulfide. This is one of several activities required for the biosynthesis of L-cysteine from sulfate. The polypeptide is Sulfite reductase [NADPH] hemoprotein beta-component (Buchnera aphidicola subsp. Acyrthosiphon pisum (strain 5A)).